Consider the following 534-residue polypeptide: NAD(P)H-quinone oxidoreductase chain 4 (534 aa).

14 helical membrane-spanning segments follow: residues 12–32, 44–64, 96–116, 120–140, 144–164, 176–196, 220–240, 251–271, 285–305, 314–334, 340–360, 384–404, 425–445, and 472–492; these read FPWL…IPFF, FALS…INGF, MPLI…AWPV, PKLF…VFAV, LLFF…LAIW, FIIY…AMGF, ILCY…VPLH, TAPV…YALL, FAPL…LTSF, IAYS…SFSS, AMLQ…LVGA, FALW…SGFV, VVMA…LLSM, and VYII…PRLV.

Belongs to the complex I subunit 4 family.

It localises to the cellular thylakoid membrane. It catalyses the reaction a plastoquinone + NADH + (n+1) H(+)(in) = a plastoquinol + NAD(+) + n H(+)(out). The catalysed reaction is a plastoquinone + NADPH + (n+1) H(+)(in) = a plastoquinol + NADP(+) + n H(+)(out). Its function is as follows. NDH-1 shuttles electrons from NAD(P)H, via FMN and iron-sulfur (Fe-S) centers, to quinones in the respiratory chain. The immediate electron acceptor for the enzyme in this species is believed to be plastoquinone. Couples the redox reaction to proton translocation (for every two electrons transferred, four hydrogen ions are translocated across the cytoplasmic membrane), and thus conserves the redox energy in a proton gradient. This chain is NAD(P)H-quinone oxidoreductase chain 4, found in Prochlorococcus marinus (strain MIT 9215).